The following is a 1111-amino-acid chain: Myosin IB heavy chain (1111 aa).

The 683-residue stretch at 9–691 (QGTDDLVMLP…TVFLLEEALD (683 aa)) folds into the Myosin motor domain. An ATP-binding site is contributed by 102 to 109 (GESGAGKT). Ser-332 bears the Phosphoserine mark. Positions 547–627 (GSLQKKRPTT…GFAYRNTFDK (81 aa)) are actin-binding. The region spanning 729–913 (KERQRNSIDR…KGLIGTIASG (185 aa)) is the TH1 domain. The segment at 910 to 1058 (IASGLPSSTD…PAPQPSRPTA (149 aa)) is disordered. The segment covering 914–928 (LPSSTDSTPKNYNPN) has biased composition (polar residues). Composition is skewed to low complexity over residues 929-944 (SMSQ…QSAG), 952-967 (GAGQ…QQRP), and 991-1012 (PMGA…LPQP). Residues 1017-1040 (GAPGGRGAPMGRGAPGGGPAGAGG) are compositionally biased toward gly residues. The SH3 domain occupies 1053–1111 (PSRPTAKALYDYDASSTDELSFKEGDIIFIVQKDNGGWTQGELKSGQKGWAPTNYLQYN).

Belongs to the TRAFAC class myosin-kinesin ATPase superfamily. Myosin family. Myosin I heavy chain is single-headed. Dimer of a heavy and a light chain. Inability to self-assemble into filaments.

It localises to the cell projection. The protein resides in the pseudopodium. It is found in the cytoplasm. Its subcellular location is the cell cortex. Functionally, myosin is a protein that binds to actin and has ATPase activity that is activated by actin. Myosin IB may have a role in chemotaxis and aggregation; it could serve to stabilize and even retract cortical structures, such as pseudopods and lamellopods. Involved in the whole cell motility of aggregation-stages cells. Overexpression results in significant decrease in the rate of cellular translocation and fluid-phase pinocytosis and abnormalities in the normal rearrangement of the actin cytoskeleton. The sequence is that of Myosin IB heavy chain (myoB) from Dictyostelium discoideum (Social amoeba).